The primary structure comprises 155 residues: MDLLRQYNFKIADASPEYLERRKKQAVLFMTAAAVTIFTSRFAYKSTITRQYIPTLFQGNHSPPLGYNFTSDAAVAVGTGTMLCASVSSMICFGTCWVLDVSTFREFGWKMKSLMGGTQKEQELADMPMDEDSAYIQDGLNDILDGKVELNFDDE.

2 helical membrane passes run V27–Y44 and V77–L99.

It belongs to the AIM11 family.

It localises to the membrane. The polypeptide is Altered inheritance of mitochondria protein 11 (AIM11) (Clavispora lusitaniae (strain ATCC 42720) (Yeast)).